The chain runs to 177 residues: Probable chemoreceptor glutamine deamidase CheD (177 aa).

The protein belongs to the CheD family.

It carries out the reaction L-glutaminyl-[protein] + H2O = L-glutamyl-[protein] + NH4(+). Its function is as follows. Probably deamidates glutamine residues to glutamate on methyl-accepting chemotaxis receptors (MCPs), playing an important role in chemotaxis. The polypeptide is Probable chemoreceptor glutamine deamidase CheD (Pseudomonas savastanoi pv. phaseolicola (strain 1448A / Race 6) (Pseudomonas syringae pv. phaseolicola (strain 1448A / Race 6))).